The following is a 444-amino-acid chain: Putative dipeptidase CPC735_015490 (444 aa).

Residues 1-34 (MSQRTEHNGSWLRNAGSLLSVLACVAVLASPASA) form the signal peptide. The Zn(2+) site is built by H67, D69, and E178. A disulfide bond links C118 and C207. H205 lines the substrate pocket. The Zn(2+) site is built by H250 and H271. Residues R282 and D342 each contribute to the substrate site. A glycan (N-linked (GlcNAc...) asparagine) is linked at N413.

This sequence belongs to the metallo-dependent hydrolases superfamily. Peptidase M19 family. Zn(2+) is required as a cofactor.

The enzyme catalyses an L-aminoacyl-L-amino acid + H2O = 2 an L-alpha-amino acid. Its function is as follows. Hydrolyzes a wide range of dipeptides. The sequence is that of Putative dipeptidase CPC735_015490 from Coccidioides posadasii (strain C735) (Valley fever fungus).